Consider the following 417-residue polypeptide: Aminoacyltransferase FemB (417 aa).

This sequence belongs to the FemABX family.

The protein localises to the cytoplasm. It carries out the reaction MurNAc-L-Ala-D-isoglutaminyl-L-Lys-(N(6)-tri-Gly)-D-Ala-D-Ala-diphospho-di-trans,octa-cis-undecaprenyl-GlcNAc + 2 glycyl-tRNA(Gly) = MurNAc-L-Ala-D-isoglutaminyl-L-Lys-(N(6)-penta-Gly)-D-Ala-D-Ala-diphospho-di-trans,octa-cis-undecaprenyl-GlcNAc + 2 tRNA(Gly) + 2 H(+). Catalyzes the incorporation of amino acid(s) into the interchain peptide bridge of peptidoglycan, using aminoacyl-tRNA as amino acid donor. This is Aminoacyltransferase FemB (femB) from Staphylococcus epidermidis.